Consider the following 647-residue polypeptide: Acetyl-coenzyme A synthetase (647 aa).

CoA-binding positions include R190–R193, T308, and N332. Residues G384–P386, D408–T413, D497, and R512 each bind ATP. S520 is a binding site for CoA. Residue R523 coordinates ATP. V534, H536, and V539 together coordinate Mg(2+). A CoA-binding site is contributed by R581. At K606 the chain carries N6-acetyllysine.

The protein belongs to the ATP-dependent AMP-binding enzyme family. Requires Mg(2+) as cofactor. Post-translationally, acetylated. Deacetylation by the SIR2-homolog deacetylase activates the enzyme.

The catalysed reaction is acetate + ATP + CoA = acetyl-CoA + AMP + diphosphate. Catalyzes the conversion of acetate into acetyl-CoA (AcCoA), an essential intermediate at the junction of anabolic and catabolic pathways. AcsA undergoes a two-step reaction. In the first half reaction, AcsA combines acetate with ATP to form acetyl-adenylate (AcAMP) intermediate. In the second half reaction, it can then transfer the acetyl group from AcAMP to the sulfhydryl group of CoA, forming the product AcCoA. This Parvibaculum lavamentivorans (strain DS-1 / DSM 13023 / NCIMB 13966) protein is Acetyl-coenzyme A synthetase.